The primary structure comprises 388 residues: Succinate--CoA ligase [ADP-forming] subunit beta (388 aa).

One can recognise an ATP-grasp domain in the interval 9–244 (KQLFSRYGLP…PSQEDPREAQ (236 aa)). Residues lysine 46, 53–55 (GRG), glutamate 99, threonine 102, and glutamate 107 each bind ATP. Mg(2+) is bound by residues asparagine 199 and aspartate 213. Substrate is bound by residues asparagine 264 and 321–323 (GIV).

This sequence belongs to the succinate/malate CoA ligase beta subunit family. Heterotetramer of two alpha and two beta subunits. The cofactor is Mg(2+).

The catalysed reaction is succinate + ATP + CoA = succinyl-CoA + ADP + phosphate. The enzyme catalyses GTP + succinate + CoA = succinyl-CoA + GDP + phosphate. The protein operates within carbohydrate metabolism; tricarboxylic acid cycle; succinate from succinyl-CoA (ligase route): step 1/1. Succinyl-CoA synthetase functions in the citric acid cycle (TCA), coupling the hydrolysis of succinyl-CoA to the synthesis of either ATP or GTP and thus represents the only step of substrate-level phosphorylation in the TCA. The beta subunit provides nucleotide specificity of the enzyme and binds the substrate succinate, while the binding sites for coenzyme A and phosphate are found in the alpha subunit. The protein is Succinate--CoA ligase [ADP-forming] subunit beta of Proteus mirabilis (strain HI4320).